Reading from the N-terminus, the 136-residue chain is Large ribosomal subunit protein uL16 (136 aa).

The protein belongs to the universal ribosomal protein uL16 family. As to quaternary structure, part of the 50S ribosomal subunit.

Functionally, binds 23S rRNA and is also seen to make contacts with the A and possibly P site tRNAs. The sequence is that of Large ribosomal subunit protein uL16 from Aggregatibacter actinomycetemcomitans (Actinobacillus actinomycetemcomitans).